Reading from the N-terminus, the 780-residue chain is Acyl-CoA dehydrogenase family member 11 (780 aa).

K177 is subject to N6-acetyllysine. The residue at position 324 (Y324) is a Phosphotyrosine. Position 391 is an N6-succinyllysine (K391). FAD contacts are provided by residues 504 to 514 (FCMTEPDVASS) and 538 to 540 (WSS). Residue S514 participates in substrate binding. 629–632 (GPGR) lines the substrate pocket. FAD contacts are provided by residues R657, Q727, and 727–731 (QVCGG). G755 lines the substrate pocket. An FAD-binding site is contributed by 756 to 758 (PDE).

Belongs to the acyl-CoA dehydrogenase family. In terms of assembly, homodimer. FAD is required as a cofactor. Widely expressed with highest levels in brain followed by liver, heart and kidney.

It localises to the peroxisome. It is found in the mitochondrion membrane. It carries out the reaction a 2,3-saturated acyl-CoA + oxidized [electron-transfer flavoprotein] + H(+) = a (2E)-enoyl-CoA + reduced [electron-transfer flavoprotein]. The catalysed reaction is docosanoyl-CoA + oxidized [electron-transfer flavoprotein] + H(+) = (2E)-docosenoyl-CoA + reduced [electron-transfer flavoprotein]. The enzyme catalyses tetracosanoyl-CoA + oxidized [electron-transfer flavoprotein] + H(+) = (2E)-tetracosenoyl-CoA + reduced [electron-transfer flavoprotein]. It catalyses the reaction eicosanoyl-CoA + oxidized [electron-transfer flavoprotein] + H(+) = (2E)-eicosenoyl-CoA + reduced [electron-transfer flavoprotein]. It carries out the reaction hexacosanoyl-CoA + oxidized [electron-transfer flavoprotein] + H(+) = (2E)-hexacosenoyl-CoA + reduced [electron-transfer flavoprotein]. The catalysed reaction is tricosanoyl-CoA + oxidized [electron-transfer flavoprotein] + H(+) = (2E)-tricosenoyl-CoA + reduced [electron-transfer flavoprotein]. Its pathway is lipid metabolism; fatty acid beta-oxidation. Its function is as follows. Acyl-CoA dehydrogenase, that exhibits maximal activity towards saturated C22-CoA. Probably participates in beta-oxydation and energy production but could also play a role in the metabolism of specific fatty acids to control fatty acids composition of cellular lipids in brain. This is Acyl-CoA dehydrogenase family member 11 (ACAD11) from Homo sapiens (Human).